We begin with the raw amino-acid sequence, 200 residues long: uncharacterized protein (200 aa).

The interval 1 to 21 (MSNSAQRDARNSRDESARASD) is disordered. Positions 7-21 (RDARNSRDESARASD) are enriched in basic and acidic residues.

This is an uncharacterized protein from Mycobacterium tuberculosis (strain CDC 1551 / Oshkosh).